The sequence spans 244 residues: Extracellular superoxide dismutase [Cu-Zn] (244 aa).

Residues 1–15 form the signal peptide; it reads MVAFLFCNLLLVACG. 2 cysteine pairs are disulfide-bonded: Cys70-Cys215 and Cys132-Cys214. An N-linked (GlcNAc...) asparagine glycan is attached at Asn114. His121, His123, and His138 together coordinate Cu cation. His138, His146, His149, and Asp152 together coordinate Zn(2+). Cu cation is bound at residue His188. The segment at 224–244 is disordered; that stretch reads AWESQTKERKKRRRESECKTT.

It belongs to the Cu-Zn superoxide dismutase family. In terms of assembly, homodimer. Interacts with ATP7A; this interaction is copper-dependent and is required for SOD3 activity. The cofactor is Cu cation. Requires Zn(2+) as cofactor.

It localises to the secreted. It is found in the extracellular space. The protein resides in the golgi apparatus. Its subcellular location is the trans-Golgi network. The catalysed reaction is 2 superoxide + 2 H(+) = H2O2 + O2. In terms of biological role, protect the extracellular space from toxic effect of reactive oxygen intermediates by converting superoxide radicals into hydrogen peroxide and oxygen. This Rattus norvegicus (Rat) protein is Extracellular superoxide dismutase [Cu-Zn] (Sod3).